Consider the following 158-residue polypeptide: UPF0262 protein Rsph17029_2283 (158 aa).

This sequence belongs to the UPF0262 family.

The sequence is that of UPF0262 protein Rsph17029_2283 from Cereibacter sphaeroides (strain ATCC 17029 / ATH 2.4.9) (Rhodobacter sphaeroides).